A 370-amino-acid chain; its full sequence is 4-hydroxy-3-methylbut-2-en-1-yl diphosphate synthase (flavodoxin) (370 aa).

4 residues coordinate [4Fe-4S] cluster: C268, C271, C303, and E310.

This sequence belongs to the IspG family. It depends on [4Fe-4S] cluster as a cofactor.

It carries out the reaction (2E)-4-hydroxy-3-methylbut-2-enyl diphosphate + oxidized [flavodoxin] + H2O + 2 H(+) = 2-C-methyl-D-erythritol 2,4-cyclic diphosphate + reduced [flavodoxin]. It functions in the pathway isoprenoid biosynthesis; isopentenyl diphosphate biosynthesis via DXP pathway; isopentenyl diphosphate from 1-deoxy-D-xylulose 5-phosphate: step 5/6. In terms of biological role, converts 2C-methyl-D-erythritol 2,4-cyclodiphosphate (ME-2,4cPP) into 1-hydroxy-2-methyl-2-(E)-butenyl 4-diphosphate. This chain is 4-hydroxy-3-methylbut-2-en-1-yl diphosphate synthase (flavodoxin), found in Bacillus pumilus (strain SAFR-032).